Consider the following 163-residue polypeptide: Small ribosomal subunit protein uS3m (163 aa).

A mitochondrion-targeting transit peptide spans 1-31; that stretch reads MAASLIRQTKLLSVFSSAGCFRSIHSTAACL.

This sequence belongs to the universal ribosomal protein uS3 family. As to quaternary structure, component of the mitochondrial ribosome small subunit (28S) which comprises a 12S rRNA and about 30 distinct proteins.

The protein resides in the mitochondrion. In Danio rerio (Zebrafish), this protein is Small ribosomal subunit protein uS3m (mrps24).